A 183-amino-acid chain; its full sequence is Ion-translocating oxidoreductase complex subunit B (183 aa).

The interval 1–23 (MLSALLVMAAIAVVLGAALGFAA) is hydrophobic. A 4Fe-4S domain is found at 29 to 88 (EGDPLVDKIDAILPQTQCGQCGYPGCKPYAQAIAQGEADINQCPPGGEEGVRKLADLLGR). [4Fe-4S] cluster-binding residues include cysteine 46, cysteine 49, cysteine 54, cysteine 71, cysteine 113, cysteine 116, cysteine 119, cysteine 123, cysteine 143, cysteine 146, cysteine 149, and cysteine 153. 4Fe-4S ferredoxin-type domains lie at 104–133 (AVAYIDENVCIGCTLCLQACPVDAIVGAAK) and 135–163 (MHTVVDPLCTGCELCVAPCPVDCIYMEPV).

The protein belongs to the 4Fe4S bacterial-type ferredoxin family. RnfB subfamily. The complex is composed of six subunits: RnfA, RnfB, RnfC, RnfD, RnfE and RnfG. Requires [4Fe-4S] cluster as cofactor.

The protein resides in the cell inner membrane. Part of a membrane-bound complex that couples electron transfer with translocation of ions across the membrane. The polypeptide is Ion-translocating oxidoreductase complex subunit B (Azoarcus sp. (strain BH72)).